Consider the following 44-residue polypeptide: Unknown protein 1 (44 aa).

This chain is Unknown protein 1, found in Lonomia obliqua (Moth).